The chain runs to 142 residues: Midkine (142 aa).

The N-terminal stretch at 1–21 (MELRAFCVILLITFLAVSSQA) is a signal peptide. Disulfide bonds link cysteine 36/cysteine 60, cysteine 44/cysteine 69, cysteine 51/cysteine 73, cysteine 83/cysteine 115, and cysteine 93/cysteine 125.

It belongs to the pleiotrophin family.

It localises to the secreted. Its function is as follows. Secreted protein that functions as a cytokine and growth factor and mediates its signal through cell-surface proteoglycan and non-proteoglycan receptors. Binds cell-surface proteoglycan receptors via their chondroitin sulfate (CS) groups. Thereby regulates many processes like inflammatory response, cell proliferation, cell adhesion, cell growth, cell survival, tissue regeneration, cell differentiation and cell migration. Inhibits mesoderm formation and promotes neural formation during development. Plays a role in development of the neuromuscular junction (NMJ). Has antibacterial activity against both Gram-positive and Gram-negative bacteria. The protein is Midkine of Xenopus tropicalis (Western clawed frog).